A 607-amino-acid polypeptide reads, in one-letter code: Elongation factor 4 (607 aa).

A tr-type G domain is found at 6 to 188 (SRIRNFSIIA…AIVARIPPPR (183 aa)). Residues 18-23 (DHGKST) and 135-138 (NKID) each bind GTP.

This sequence belongs to the TRAFAC class translation factor GTPase superfamily. Classic translation factor GTPase family. LepA subfamily.

It is found in the cell inner membrane. The catalysed reaction is GTP + H2O = GDP + phosphate + H(+). In terms of biological role, required for accurate and efficient protein synthesis under certain stress conditions. May act as a fidelity factor of the translation reaction, by catalyzing a one-codon backward translocation of tRNAs on improperly translocated ribosomes. Back-translocation proceeds from a post-translocation (POST) complex to a pre-translocation (PRE) complex, thus giving elongation factor G a second chance to translocate the tRNAs correctly. Binds to ribosomes in a GTP-dependent manner. This chain is Elongation factor 4, found in Sphingopyxis alaskensis (strain DSM 13593 / LMG 18877 / RB2256) (Sphingomonas alaskensis).